Consider the following 602-residue polypeptide: Lysine--tRNA ligase, chloroplastic/mitochondrial (602 aa).

Low complexity predominate over residues Ser50–Ser62. The interval Ser50–Ala83 is disordered. A DNA-binding region (OB) is located at residues Val136 to Leu214. Substrate is bound by residues Gly285 and Glu309. Residues Arg331–Glu333 and His339–Asn340 each bind ATP. The substrate site is built by Glu347 and Tyr349. Glu492 and Glu499 together coordinate Ca(2+). Glu499–Met500 is an ATP binding site. 2 residues coordinate substrate: Asn502 and Glu506. Residues His524 to Asp543 are compositionally biased toward basic and acidic residues. The tract at residues His524 to Tyr550 is disordered. Gly575–Arg578 contributes to the ATP binding site.

It belongs to the class-II aminoacyl-tRNA synthetase family. Ca(2+) serves as cofactor.

The protein resides in the plastid. The protein localises to the chloroplast. It localises to the mitochondrion. The catalysed reaction is tRNA(Lys) + L-lysine + ATP = L-lysyl-tRNA(Lys) + AMP + diphosphate. Functionally, catalyzes the specific attachment of an amino acid to its cognate tRNA in a 2 step reaction: the amino acid (AA) is first activated by ATP to form AA-AMP and then transferred to the acceptor end of the tRNA. The polypeptide is Lysine--tRNA ligase, chloroplastic/mitochondrial (Arabidopsis thaliana (Mouse-ear cress)).